The following is a 115-amino-acid chain: U31-theraphotoxin-Cg1a (115 aa).

An N-terminal signal peptide occupies residues Met1–Gly18. Residues Arg19–Ala51 constitute a propeptide that is removed on maturation. 4 cysteine pairs are disulfide-bonded: Cys52/Cys67, Cys60/Cys73, Cys64/Cys113, and Cys66/Cys86.

It belongs to the neurotoxin 03 (Tx2) family. 02 subfamily. As to expression, expressed by the venom gland.

It is found in the secreted. Its function is as follows. Probable ion channel inhibitor. The chain is U31-theraphotoxin-Cg1a from Chilobrachys guangxiensis (Chinese earth tiger tarantula).